Here is a 248-residue protein sequence, read N- to C-terminus: Pyridoxine 5'-phosphate synthase (248 aa).

A 3-amino-2-oxopropyl phosphate-binding site is contributed by N12. 14-15 (DH) lines the 1-deoxy-D-xylulose 5-phosphate pocket. A 3-amino-2-oxopropyl phosphate-binding site is contributed by R23. The active-site Proton acceptor is the H48. 1-deoxy-D-xylulose 5-phosphate is bound by residues R50 and H55. The Proton acceptor role is filled by E75. 1-deoxy-D-xylulose 5-phosphate is bound at residue T105. Catalysis depends on H196, which acts as the Proton donor. 3-amino-2-oxopropyl phosphate-binding positions include G197 and 218-219 (GH).

It belongs to the PNP synthase family. In terms of assembly, homooctamer; tetramer of dimers.

The protein resides in the cytoplasm. The catalysed reaction is 3-amino-2-oxopropyl phosphate + 1-deoxy-D-xylulose 5-phosphate = pyridoxine 5'-phosphate + phosphate + 2 H2O + H(+). Its pathway is cofactor biosynthesis; pyridoxine 5'-phosphate biosynthesis; pyridoxine 5'-phosphate from D-erythrose 4-phosphate: step 5/5. Catalyzes the complicated ring closure reaction between the two acyclic compounds 1-deoxy-D-xylulose-5-phosphate (DXP) and 3-amino-2-oxopropyl phosphate (1-amino-acetone-3-phosphate or AAP) to form pyridoxine 5'-phosphate (PNP) and inorganic phosphate. In Stutzerimonas stutzeri (strain A1501) (Pseudomonas stutzeri), this protein is Pyridoxine 5'-phosphate synthase.